The primary structure comprises 359 residues: Protein RecA (359 aa).

74 to 81 (GPESSGKT) is a binding site for ATP.

This sequence belongs to the RecA family.

It is found in the cytoplasm. In terms of biological role, can catalyze the hydrolysis of ATP in the presence of single-stranded DNA, the ATP-dependent uptake of single-stranded DNA by duplex DNA, and the ATP-dependent hybridization of homologous single-stranded DNAs. It interacts with LexA causing its activation and leading to its autocatalytic cleavage. The protein is Protein RecA of Anaplasma marginale (strain St. Maries).